Reading from the N-terminus, the 73-residue chain is Kappa-scoloptoxin(03)-Ssm1c (73 aa).

A signal peptide spans 1–23 (MKSWMAILLVMALIIFTLDNCYS). Intrachain disulfides connect cysteine 32-cysteine 58, cysteine 41-cysteine 57, and cysteine 44-cysteine 67.

The protein belongs to the scoloptoxin family. As to expression, expressed by the venom gland.

The protein resides in the secreted. Functionally, inhibits voltage-gated potassium channels. In Scolopendra mutilans (Chinese red-headed centipede), this protein is Kappa-scoloptoxin(03)-Ssm1c.